A 451-amino-acid chain; its full sequence is IMP-specific 5'-nucleotidase 1 (451 aa).

Residue Asp153 is the Nucleophile of the active site. Asp153, Asp155, Asp161, Thr189, Asp377, and Lys385 together coordinate IMP. Residues Asp153 and Asp155 each contribute to the Mg(2+) site. Catalysis depends on Asp155, which acts as the Proton donor. Asp409 contacts Mg(2+).

It belongs to the ISN1 family. In terms of assembly, homotetramer. Mg(2+) is required as a cofactor.

It carries out the reaction IMP + H2O = inosine + phosphate. Allosterically activated by ATP. ATP binding is a prerequisite to magnesium and substrate binding. ATP binds to 2 of the subunits in the homotetramer inducing a closure of these 2 subunits and the release of the C-terminal loop, thereby activating the enzyme. Its function is as follows. IMP-specific 5'-nucleotidase involved in IMP (inositol monophosphate) degradation. This chain is IMP-specific 5'-nucleotidase 1 (isn1), found in Emericella nidulans (strain FGSC A4 / ATCC 38163 / CBS 112.46 / NRRL 194 / M139) (Aspergillus nidulans).